We begin with the raw amino-acid sequence, 189 residues long: Homeobox protein HD-2 (189 aa).

Positions 119 to 181 (KPRTRANFPM…NARRRILPFM (63 aa)) form a DNA-binding region, homeobox; TALE-type.

Belongs to the TALE/KNOX homeobox family.

The protein resides in the nucleus. This Encephalitozoon cuniculi (strain GB-M1) (Microsporidian parasite) protein is Homeobox protein HD-2 (HD-2).